A 236-amino-acid polypeptide reads, in one-letter code: MIVDGRVSKIVLASIKNNIYKVFITVNSPIKFIAGQFVMVTINGKKCPFSIANCPTKNHEIELHIGSSNKDCSLDIIEYFVDALVEEVAIELDAPHGNAWLRSESNNPLLLIAGGTGLSYINSILTNCLNRNIPQDIYLYWGVKNSSLLYEDEELLELSLNNKNLHYIPVIEDKSEEWIGKKGTVLDAVMEDFTDLAHFDIYVCGPFMMAKTAKEKLIEEKKAKSEQMFADAFAYV.

Positions 1-102 (MIVDGRVSKI…DAPHGNAWLR (102 aa)) constitute an FAD-binding FR-type domain. A pyridine-binding site is contributed by 114 to 118 (GGTGL).

This sequence belongs to the Fre/LuxG FAD/NAD(P) flavoprotein oxidoreductase family.

Probable flavin reductase in the luminescent systems of different marine bacteria. The protein is Probable flavin reductase (luxG) of Aliivibrio fischeri (Vibrio fischeri).